A 528-amino-acid polypeptide reads, in one-letter code: Sensory rhodopsin I transducer (528 aa).

2 helical membrane passes run 11–31 (GAKLGVGYIATATLLITVGVV) and 35–55 (VASTVVAGIAGLLTLGSINAA). 2 HAMP domains span residues 55–107 (AETV…DRLS) and 142–195 (TAYQ…ETIE). The Methyl-accepting transducer domain maps to 214–455 (TSRRVQQEVD…ATADSIADVT (242 aa)). Position 259 is a glutamate methyl ester (Glu) (E259).

It belongs to the methyl-accepting chemotaxis (MCP) protein family. Interacts with Sop1.

Its subcellular location is the cell membrane. Its function is as follows. Transduces signals from the phototaxis receptor sensory rhodopsin I (Sop1). The polypeptide is Sensory rhodopsin I transducer (htr1) (Haloarcula marismortui (strain ATCC 43049 / DSM 3752 / JCM 8966 / VKM B-1809) (Halobacterium marismortui)).